We begin with the raw amino-acid sequence, 165 residues long: Anaerobic nitrite reductase GLB1 (165 aa).

The 151-residue stretch at 12 to 162 (VFGEEQEALV…LVAAIKREMK (151 aa)) folds into the Globin domain. The Homodimerization motif lies at 45–49 (EIAPS). Positions 55, 69, 73, 103, 107, and 108 each coordinate heme b. The Homodimerization motif lies at 115-127 (DGHFEVTGFALLE).

The protein belongs to the plant globin family. Homodimer. Heme b serves as cofactor. In terms of tissue distribution, in embryonic organs and at low levels in vegetative organs.

Its subcellular location is the cytoplasm. The protein localises to the nucleus. The catalysed reaction is Fe(III)-heme b-[protein] + nitric oxide + H2O = Fe(II)-heme b-[protein] + nitrite + 2 H(+). Functionally, phytoglobin that reduces nitrite to nitric oxide (NO) under anoxic conditions (e.g. during flooding or in waterlogged soil). May not function as an oxygen storage or transport protein. Has an unusually high affinity for O(2) through an hexacoordinate heme iron because of a very low dissociation constant. The polypeptide is Anaerobic nitrite reductase GLB1 (HB) (Zea mays (Maize)).